Reading from the N-terminus, the 1141-residue chain is PR domain zinc finger protein 15 (1141 aa).

The 111-residue stretch at 49–159 (PNLEIRRLED…PGTELRVWYA (111 aa)) folds into the SET domain. The C2H2-type 1 zinc finger occupies 197–219 (WACKVCSATFLELQLLNEHLLGH). The interval 224–283 (KSLPPGSQSEAAAPEKEQDTPRGEPPAVPESENVATKEQKKKPRRGRKPKVSKAEQPLVI) is disordered. Over residues 236–245 (APEKEQDTPR) the composition is skewed to basic and acidic residues. Basic residues predominate over residues 262-274 (QKKKPRRGRKPKV). 4 consecutive C2H2-type zinc fingers follow at residues 372 to 394 (YQCN…VRSH), 399 to 422 (FKCE…SYKH), 460 to 482 (FQCE…KKKH), and 487 to 509 (FACE…QRRH). Residue Lys-517 forms a Glycyl lysine isopeptide (Lys-Gly) (interchain with G-Cter in SUMO2) linkage. C2H2-type zinc fingers lie at residues 536-558 (SGCP…LLTH) and 563-585 (YTCE…IHVH). Positions 604–623 (IGISSEENDDNSDESADSEP) are disordered. Over residues 609 to 620 (EENDDNSDESAD) the composition is skewed to acidic residues. C2H2-type zinc fingers lie at residues 626 to 649 (YSCK…MEVH), 654 to 676 (YGCS…MVIH), 690 to 712 (HPCE…KLIH), 718 to 740 (HACE…MRVH), 746 to 768 (YLCA…MKLH), 774 to 796 (YECK…CKRH), 802 to 824 (FMCE…KLIH), 830 to 853 (WTCS…QLTH), and 859 to 882 (QSCQ…RRKH). Disordered stretches follow at residues 922-973 (AEGK…DETN) and 1108-1141 (QTDV…MYSY). The segment covering 927–938 (GKAAKRSHKRKQ) has biased composition (basic residues). Positions 1121–1141 (PQQAAQPQVQAEQQQQQMYSY) are enriched in low complexity.

Belongs to the class V-like SAM-binding methyltransferase superfamily. Detected in all tissues examined.

The protein resides in the nucleus. Its function is as follows. Sequence-specific DNA-binding transcriptional regulator. Plays a role as a molecular node in a transcriptional network regulating embryonic development and cell fate decision. Stimulates the expression of upstream key transcriptional activators and repressors of the Wnt/beta-catenin and MAPK/ERK pathways, respectively, that are essential for naive pluripotency and self-renewal maintenance of embryonic stem cells (ESCs). Specifically promotes SPRY1 and RSPO1 transcription activation through recognition and direct binding of a specific DNA sequence in their promoter regions. Involved in early embryo development. Also plays a role in induced pluripotent stem cells (iPSCs) reprogramming. This Homo sapiens (Human) protein is PR domain zinc finger protein 15.